The chain runs to 305 residues: Probable 5-dehydro-4-deoxyglucarate dehydratase (305 aa).

This sequence belongs to the DapA family.

The catalysed reaction is 5-dehydro-4-deoxy-D-glucarate + H(+) = 2,5-dioxopentanoate + CO2 + H2O. It functions in the pathway carbohydrate acid metabolism; D-glucarate degradation; 2,5-dioxopentanoate from D-glucarate: step 2/2. The chain is Probable 5-dehydro-4-deoxyglucarate dehydratase from Xanthomonas campestris pv. campestris (strain 8004).